The primary structure comprises 349 residues: Phosphoribosylformylglycinamidine cyclo-ligase (349 aa).

This sequence belongs to the AIR synthase family.

It is found in the cytoplasm. The enzyme catalyses 2-formamido-N(1)-(5-O-phospho-beta-D-ribosyl)acetamidine + ATP = 5-amino-1-(5-phospho-beta-D-ribosyl)imidazole + ADP + phosphate + H(+). It participates in purine metabolism; IMP biosynthesis via de novo pathway; 5-amino-1-(5-phospho-D-ribosyl)imidazole from N(2)-formyl-N(1)-(5-phospho-D-ribosyl)glycinamide: step 2/2. The polypeptide is Phosphoribosylformylglycinamidine cyclo-ligase (Bordetella avium (strain 197N)).